Consider the following 337-residue polypeptide: Glyceraldehyde-3-phosphate dehydrogenase (337 aa).

NAD(+) is bound by residues 11-12 and G111; that span reads TI. 140–142 is a binding site for D-glyceraldehyde 3-phosphate; that stretch reads SCN. C141 acts as the Nucleophile in catalysis. Residue R169 coordinates NAD(+). The disordered stretch occupies residues 177 to 196; the sequence is KKGPINSIVPTTEVPSHHGP. 194-195 contributes to the D-glyceraldehyde 3-phosphate binding site; that stretch reads HG. NAD(+) is bound at residue Q301.

The protein belongs to the glyceraldehyde-3-phosphate dehydrogenase family. As to quaternary structure, homotetramer.

The protein localises to the cytoplasm. It catalyses the reaction D-glyceraldehyde 3-phosphate + phosphate + NADP(+) = (2R)-3-phospho-glyceroyl phosphate + NADPH + H(+). The enzyme catalyses D-glyceraldehyde 3-phosphate + phosphate + NAD(+) = (2R)-3-phospho-glyceroyl phosphate + NADH + H(+). It participates in carbohydrate degradation; glycolysis; pyruvate from D-glyceraldehyde 3-phosphate: step 1/5. This Methanosphaera stadtmanae (strain ATCC 43021 / DSM 3091 / JCM 11832 / MCB-3) protein is Glyceraldehyde-3-phosphate dehydrogenase.